Reading from the N-terminus, the 504-residue chain is Maturase K (504 aa).

It belongs to the intron maturase 2 family. MatK subfamily.

The protein localises to the plastid. Its subcellular location is the chloroplast. Its function is as follows. Usually encoded in the trnK tRNA gene intron. Probably assists in splicing its own and other chloroplast group II introns. In Quercus gemelliflora (Pasang hiris), this protein is Maturase K.